The chain runs to 371 residues: MKPSATSSDLATGPQARAVWPLSEPALTYFPDVRFATSDRDLTAGAAPTPQSAAMVDDQPHVPVLLDRCVELLAPALTREGATLVDATLGAGGHSERFLTDFPGLRLIGLDRDPDALRIAGERLAPFADRITLVRTRYDGIADAVRDAAGGSVDAILFDLGVSSMQLDRVERGFSYSTDAPLDMRMDSGADLTAAQVLNSYDERALARVLREYGEEKFAGRIAAFIVRRRAVTPFTTTGELVELLYDAIPAPARRTGGHPAKRTFQALRIEVNAELESLRSAIPAALQALRPHGRLAVMAYQSLEDRIVKTAFAAATASRTPPGLPVELPGHGPEFVALTRGAERADAEEIERNPRSAPVRLRAVEKVGGE.

Residues 92–94 (GGH), Asp-111, Tyr-138, Asp-159, and Gln-166 each bind S-adenosyl-L-methionine.

It belongs to the methyltransferase superfamily. RsmH family.

It localises to the cytoplasm. The enzyme catalyses cytidine(1402) in 16S rRNA + S-adenosyl-L-methionine = N(4)-methylcytidine(1402) in 16S rRNA + S-adenosyl-L-homocysteine + H(+). In terms of biological role, specifically methylates the N4 position of cytidine in position 1402 (C1402) of 16S rRNA. The polypeptide is Ribosomal RNA small subunit methyltransferase H (Mycolicibacterium gilvum (strain PYR-GCK) (Mycobacterium gilvum (strain PYR-GCK))).